A 122-amino-acid polypeptide reads, in one-letter code: Large ribosomal subunit protein uL14 (122 aa).

Belongs to the universal ribosomal protein uL14 family. In terms of assembly, part of the 50S ribosomal subunit. Forms a cluster with proteins L3 and L19. In the 70S ribosome, L14 and L19 interact and together make contacts with the 16S rRNA in bridges B5 and B8.

Binds to 23S rRNA. Forms part of two intersubunit bridges in the 70S ribosome. In Methylococcus capsulatus (strain ATCC 33009 / NCIMB 11132 / Bath), this protein is Large ribosomal subunit protein uL14.